Consider the following 303-residue polypeptide: Taste receptor type 2 member 13 (303 aa).

Over 1–7 (MESALPS) the chain is Extracellular. Residues 8–28 (ILTLVIIAEFIIGNLSNGFIV) traverse the membrane as a helical segment. Residues 29–55 (LINYIDWVSKRELSSVDKLLIILAISR) are Cytoplasmic-facing. The chain crosses the membrane as a helical span at residues 56-76 (IGLIWEILVSWFLALHYLAIF). Topologically, residues 77-85 (VSGTGLRIM) are extracellular. The helical transmembrane segment at 86 to 106 (IFSWIVSNHFSLWLATILSIF) threads the bilayer. The Cytoplasmic segment spans residues 107-128 (YLLKIASFSSPAFLYLKWRVNK). Residues 129–149 (VILMILLGSLVFLFLNLIQIN) traverse the membrane as a helical segment. The Extracellular portion of the chain corresponds to 150 to 184 (IHIKDWLDRYEGNTTWNFSMSDFVTFSVSVKFTMT). Residues Asn-162 and Asn-166 are each glycosylated (N-linked (GlcNAc...) asparagine). A helical transmembrane segment spans residues 185-205 (MFSLTPFTVALISFSLLIFSL). Residues 206–232 (QKHLQKMQLNYKGHREPRTKVHTNALK) are Cytoplasmic-facing. The chain crosses the membrane as a helical span at residues 233–253 (IVISFLLLYASFFLCILISWI). Over 254-261 (SELYQNTA) the chain is Extracellular. The chain crosses the membrane as a helical span at residues 262 to 282 (IYMLCETIGLFYPSSHSFLLI). Topologically, residues 283-303 (LGNPKLRQAFLLVAAKVWAKR) are cytoplasmic.

This sequence belongs to the G-protein coupled receptor T2R family.

The protein resides in the membrane. Functionally, receptor that may play a role in the perception of bitterness and is gustducin-linked. May play a role in sensing the chemical composition of the gastrointestinal content. The activity of this receptor may stimulate alpha gustducin, mediate PLC-beta-2 activation and lead to the gating of TRPM5. The sequence is that of Taste receptor type 2 member 13 (TAS2R13) from Pongo pygmaeus (Bornean orangutan).